We begin with the raw amino-acid sequence, 290 residues long: Iron-sulfur cluster carrier protein (290 aa).

Residue 47-54 (GKGGVGKS) participates in ATP binding.

It belongs to the Mrp/NBP35 ATP-binding proteins family. In terms of assembly, homodimer.

Functionally, binds and transfers iron-sulfur (Fe-S) clusters to target apoproteins. Can hydrolyze ATP. The protein is Iron-sulfur cluster carrier protein of Methanocaldococcus jannaschii (strain ATCC 43067 / DSM 2661 / JAL-1 / JCM 10045 / NBRC 100440) (Methanococcus jannaschii).